Consider the following 220-residue polypeptide: MEHPVFERDPSQKSEAERREVPPLLKLALELGPLLVFFFANARGEMLIERFPVLASIGAPIFLATALFMGATVIALAISWTMTRTLPIMPLVSGIVVLVFGALTLWLHNDTFIKMKPTIVNTLFGAILLGGLFFGKSLLGYVFDSAFRLDAEGWRKLTLRWGLFFIFLAVVNEVVWRNFSTDAWVSFKVWGIMPITIVFTLLQMPLIQKHSLTEDNKTAS.

6 helical membrane passes run 20 to 40, 57 to 77, 86 to 106, 123 to 143, 156 to 176, and 187 to 207; these read EVPPLLKLALELGPLLVFFFA, IGAPIFLATALFMGATVIALA, LPIMPLVSGIVVLVFGALTLW, LFGAILLGGLFFGKSLLGYVF, KLTLRWGLFFIFLAVVNEVVW, and FKVWGIMPITIVFTLLQMPLI.

This sequence belongs to the YciB family.

It localises to the cell inner membrane. Functionally, plays a role in cell envelope biogenesis, maintenance of cell envelope integrity and membrane homeostasis. The sequence is that of Inner membrane-spanning protein YciB from Brucella anthropi (strain ATCC 49188 / DSM 6882 / CCUG 24695 / JCM 21032 / LMG 3331 / NBRC 15819 / NCTC 12168 / Alc 37) (Ochrobactrum anthropi).